A 304-amino-acid chain; its full sequence is Acetylglutamate kinase (304 aa).

Residues 74–75, R96, and N201 each bind substrate; that span reads GG.

The protein belongs to the acetylglutamate kinase family. ArgB subfamily.

Its subcellular location is the cytoplasm. It catalyses the reaction N-acetyl-L-glutamate + ATP = N-acetyl-L-glutamyl 5-phosphate + ADP. It functions in the pathway amino-acid biosynthesis; L-arginine biosynthesis; N(2)-acetyl-L-ornithine from L-glutamate: step 2/4. In terms of biological role, catalyzes the ATP-dependent phosphorylation of N-acetyl-L-glutamate. This is Acetylglutamate kinase from Alkalilimnicola ehrlichii (strain ATCC BAA-1101 / DSM 17681 / MLHE-1).